The sequence spans 546 residues: U3 small nucleolar RNA-associated protein 18 homolog (546 aa).

Disordered regions lie at residues 1–55, 94–118, and 177–205; these read MSLS…LEES, SAVRQIPDYEDDGDDDEELSDEENG, and NPGTDWARPDSQIVDGESSDDDDTQDGGV. A compositionally biased stretch (basic and acidic residues) spans 13 to 23; that stretch reads IKREELKKQYE. Positions 24–35 are enriched in acidic residues; sequence DVEDEEEIGSDD. At Ser-33 the chain carries Phosphoserine. Basic and acidic residues predominate over residues 45-55; sequence TEKEKQKLEES. Acidic residues-rich tracts occupy residues 101–117 and 193–205; these read DYEDDGDDDEELSDEEN and ESSDDDDTQDGGV. WD repeat units lie at residues 242-281, 372-411, 413-454, and 509-545; these read PSNGPINSVHFHQNAQLLLTAGLDRRLRFFQIDGKRNTKI, KMNGSVRSLAFSEDGKHLLSSGGDGQVYVWDLRTMKCLYK, VDEG…GGKR, and STMHYPRCLDFSPGSGFMAMGNAAGKVLLYKLHHYQN. The short motif at 389 to 404 is the DWD box element; that stretch reads LLSSGGDGQVYVWDLR.

Belongs to the WD repeat UTP18 family.

The protein resides in the nucleus. It localises to the nucleolus. Involved in nucleolar processing of pre-18S ribosomal RNA. The protein is U3 small nucleolar RNA-associated protein 18 homolog of Arabidopsis thaliana (Mouse-ear cress).